Consider the following 342-residue polypeptide: tRNA N6-adenosine threonylcarbamoyltransferase (342 aa).

Fe cation contacts are provided by histidine 120 and histidine 124. Substrate contacts are provided by residues 142–146 (VVSGG), aspartate 175, glycine 188, aspartate 192, and asparagine 281. Aspartate 310 is a binding site for Fe cation.

The protein belongs to the KAE1 / TsaD family. It depends on Fe(2+) as a cofactor.

It localises to the cytoplasm. It catalyses the reaction L-threonylcarbamoyladenylate + adenosine(37) in tRNA = N(6)-L-threonylcarbamoyladenosine(37) in tRNA + AMP + H(+). Functionally, required for the formation of a threonylcarbamoyl group on adenosine at position 37 (t(6)A37) in tRNAs that read codons beginning with adenine. Is involved in the transfer of the threonylcarbamoyl moiety of threonylcarbamoyl-AMP (TC-AMP) to the N6 group of A37, together with TsaE and TsaB. TsaD likely plays a direct catalytic role in this reaction. This chain is tRNA N6-adenosine threonylcarbamoyltransferase, found in Geobacillus thermodenitrificans (strain NG80-2).